Reading from the N-terminus, the 141-residue chain is Large ribosomal subunit protein uL13 (141 aa).

Belongs to the universal ribosomal protein uL13 family. Part of the 50S ribosomal subunit.

In terms of biological role, this protein is one of the early assembly proteins of the 50S ribosomal subunit, although it is not seen to bind rRNA by itself. It is important during the early stages of 50S assembly. This chain is Large ribosomal subunit protein uL13, found in Helicobacter pylori (strain G27).